Consider the following 360-residue polypeptide: Inhibin alpha chain (360 aa).

Residues 1-17 form the signal peptide; the sequence is MWLQLLLLLLAPQGGHG. A propeptide spanning residues 18-60 is cleaved from the precursor; the sequence is CHGLELDRELVLAKVRALFLDALGPPPVTGEGGDPGVRRLHRR. The propeptide at 61 to 226 is inhibin alpha N-terminal region; the sequence is HAVGGFMRRG…PPSGGERARR (166 aa). 2 N-linked (GlcNAc...) asparagine glycosylation sites follow: Asn-140 and Asn-262. 3 disulfides stabilise this stretch: Cys-256-Cys-322, Cys-285-Cys-357, and Cys-289-Cys-359.

The protein belongs to the TGF-beta family. Dimeric, linked by one or more disulfide bonds. Activin B is a dimer of alpha and beta-B. Inhibin A is a dimer of alpha and beta-A. Inhibin B is a dimer of alpha and beta-B. Interacts with TGFBR3L; this interaction regulates female fertility. Proteolytic processing yields a number of bioactive forms, consisting either solely of the mature alpha chain, of the most N-terminal propeptide linked through a disulfide bond to the mature alpha chain, or of the entire proprotein.

The protein resides in the secreted. Its function is as follows. Inhibins and activins inhibit and activate, respectively, the secretion of follitropin by the pituitary gland. Inhibins/activins are involved in regulating a number of diverse functions such as hypothalamic and pituitary hormone secretion, gonadal hormone secretion, germ cell development and maturation, erythroid differentiation, insulin secretion, nerve cell survival, embryonic axial development or bone growth, depending on their subunit composition. Inhibins appear to oppose the functions of activins. Functionally, inhibin A is a dimer of alpha/INHA and beta-A/INHBA that functions as a feedback regulator in the hypothalamic-pituitary-gonadal (HPG) axis. Inhibits the secretion of FSH from the anterior pituitary gland by acting on pituitary gonadotrope cells. Antagonizes activin A by binding to the proteoglycan, betaglycan, and forming a stable complex with and, thereby, sequestering type II activin receptors while excluding type I receptor. In terms of biological role, inhibin B is a dimer of alpha and beta-B that plays a crucial role in the regulation of the reproductive system by inhibiting the secretion of follicle-stimulating hormone (FSH) from the anterior pituitary gland. Thereby, maintains reproductive homeostasis in both males and females. Acts as a more potent suppressor of FSH release than inhibin A. Functions as competitive receptor antagonist binding activin type II receptors with high affinity in the presence of the TGF-beta type III coreceptor/TGFBR3L. This is Inhibin alpha chain (INHA) from Bos taurus (Bovine).